The following is a 1491-amino-acid chain: MGDTAKPYFVKRTKDRGIIDDDDFRRGHPQQDYLIMDDYAKGHSSKMEKGLPKKKISPGNYGNTPRKGLYGVSSNPYAFKNPIYSQPAWMNDNHKDQNKKWLSDELAGNADSWREFKPGPRIPVISRSRKESFQESDDAYRWQEGRGCRAVRRLFQKDLSSLEAMSEMEAGSPENKKQRSRPRKPRRTRTEDSEQDGDLDGPVIDESVLSTKELLGLQQAEERLKRDCIDRLKRRPRNCPTAKYTCKLCDALIDSIPFAHKHIKEKRHKKNLKEKQEEELLTTLPPPAPSQIHAVGSAIDRVVQEFGLHSENLDQRLEIKRVMESVFRHKLPDCSLRLYGSSCSRLGFRDSDVNIDVQFPAVMSQPDVLLLVQECLKNSDSFIDVDADFHARVPVVVCRDKQSGLLCKVSAGNENAWLTTKHLTALGKLEPRLVPLVIAFRYWAKLCSIDRPEEGGLPPYVFALMAVFFLQQRKEPLLPVYLGSWIEEFSLNKLGNFSLKDVEKDSVVWEYTDNSTGDTSSAKEEAPKETAAKKGQVPLTFNIKHQPSVPVGQLWVELLRFYALEFNLADLVISIRVKELISRESKDWPKKRIAIEDPYSVKRNVARTLNNQPVFEYILHCLRTTYKYFALPHKVTKPNLTKPPSPVTCVSDPYREAKNGGPEPQATNIDKLGNAAVAQDPGVQTSGDCRAQLVTLKNTTEEVGSPAKEKTGGVHIPAHQESSGCVQAEVSCEGLEDATAELPETGSDNEEVRRKTKHPLSTDDQGLSSSKHPELQNCGSLCGLQADNTLELVAEECNSCASLDNKAEVNEERIEGAEELEEAAALSCFSPSVQSRTSAAMHFDDEEEEEEEEEEEEPRLSINLTEDEEGVANEHQVDSRYAGSGEEDALSEEDDLAEPAKGEDTGECGENVGGTLLIDLNRITLKEESFPEEDLPGDQSEFFYEFRKLTFTKGKSPTVVCSLCKREGHLKKDCPEDFKRVQLEPLPPLTPKFSNILDQVCVQCYKDFSPTIVEDQAREHIRQNLESFIKQDFPGTKLSLFGSSKNGFGFKQSDLDVCMTINGHETAEGLDCVRTIEELARVLRKHSGLRNILPITTAKVPIVKFFHLRSGLEVDISLYNTLALHNTRLLSAYSAIDPRVKYLCYTMKVFTKMCDIGDASRGSLSSYAYTLMVLYFLQQRSPPVIPVLQEIYKGEKKPEILVDGWNIYFFDQINELPTCWPEYGKNTEPVGQLWLGLLRFYTEEFDFKEHVISIRRKSLLTTFKKQWTSKYIVIEDPFDLNHNLGAGLSRKMTNFIMKAFINGRRVFGIPVKGFPKDNPSKLAYFFDPDVLTEGELAPNDRCCRICGKIGHFMKDCPMRRKVRRRRDQEDTPNQRYSESKEKRSKEDKEIQNKYTEKEVSTKEDKLTPCAAAKAKPVRAAVDLGREKLLRTPTEKWKRQDDRDSREKRCFICGREGHIKKECPQFKGSPGSLSSKYMTQGRASVKRTQQES.

The residue at position 64 (threonine 64) is a Phosphothreonine. Serine 132 and serine 172 each carry phosphoserine. The segment at 165 to 203 (MSEMEAGSPENKKQRSRPRKPRRTRTEDSEQDGDLDGPV) is disordered. Positions 178–187 (QRSRPRKPRR) are enriched in basic residues. The Matrin-type zinc finger occupies 244–274 (YTCKLCDALIDSIPFAHKHIKEKRHKKNLKE). The region spanning 551 to 600 (VGQLWVELLRFYALEFNLADLVISIRVKELISRESKDWPKKRIAIEDPYS) is the PAP-associated 1 domain. Phosphoserine occurs at positions 600 and 747. Disordered regions lie at residues 740-774 (AELP…KHPE) and 834-911 (QSRT…CGEN). Residues 844–857 (DDEEEEEEEEEEEE) show a composition bias toward acidic residues. At threonine 865 the chain carries Phosphothreonine. A compositionally biased stretch (acidic residues) spans 885 to 897 (GEEDALSEEDDLA). Residue serine 891 is modified to Phosphoserine. The sufficient for monouridylation activity stretch occupies residues 947–1491 (RKLTFTKGKS…ASVKRTQQES (545 aa)). The segment at 959–976 (VVCSLCKREGHLKKDCPE) adopts a CCHC-type 1 zinc-finger fold. UTP-binding positions include 1043 to 1046 (SSKN), 1053 to 1056 (SDLD), asparagine 1126, lysine 1148, 1166 to 1170 (SYAYT), and histidine 1282. 2 residues coordinate Mg(2+): aspartate 1054 and aspartate 1056. Residues 1230-1282 (VGQLWLGLLRFYTEEFDFKEHVISIRRKSLLTTFKKQWTSKYIVIEDPFDLNH) form the PAP-associated 2 domain. The segment at 1341–1358 (RCCRICGKIGHFMKDCPM) adopts a CCHC-type 2 zinc-finger fold. 2 disordered regions span residues 1362-1399 (VRRR…EKEV) and 1463-1491 (PQFK…QQES). Positions 1377-1399 (SESKEKRSKEDKEIQNKYTEKEV) are enriched in basic and acidic residues. Residues 1447–1464 (KRCFICGREGHIKKECPQ) form a CCHC-type 3 zinc finger. Residues 1470 to 1481 (GSLSSKYMTQGR) are compositionally biased toward polar residues.

The protein belongs to the DNA polymerase type-B-like family. Mg(2+) is required as a cofactor. Mn(2+) serves as cofactor.

The protein resides in the cytoplasm. It catalyses the reaction RNA(n) + UTP = RNA(n)-3'-uridine ribonucleotide + diphosphate. Uridylyltransferase that mediates the terminal uridylation of mRNAs with short (less than 25 nucleotides) poly(A) tails, hence facilitating global mRNA decay. Essential for both oocyte maturation and fertility. Through 3' terminal uridylation of mRNA, sculpts, with TUT7, the maternal transcriptome by eliminating transcripts during oocyte growth. Involved in microRNA (miRNA)-induced gene silencing through uridylation of deadenylated miRNA targets. Also acts as a suppressor of miRNA biogenesis by mediating the terminal uridylation of miRNA precursors, including that of let-7 (pre-let-7). Uridylated pre-let-7 RNA is not processed by Dicer and undergo degradation. Pre-let-7 uridylation is strongly enhanced in the presence of LIN28A. Due to functional redundancy between ZCCHC6 and ZCCHC11, the identification of the specific role of each of these proteins is difficult. Involved in microRNA (miRNA)-induced gene silencing through uridylation of deadenylated miRNA targets. Also functions as an integral regulator of microRNA biogenesiS using 3 different uridylation mechanisms. Acts as a suppressor of miRNA biogenesis by mediating the terminal uridylation of some miRNA precursors, including that of let-7 (pre-let-7). Uridylated pre-let-7 RNA is not processed by Dicer and undergo degradation. Pre-let-7 oligouridylation is strongly enhanced in the presence of LIN28A. In the absence of LIN28A, TUT7 and TUT4 monouridylate group II pre-miRNAs, which includes most of pre-let7 members, that shapes an optimal 3' end overhang for efficient processing. Add oligo-U tails to truncated pre-miRNAS with a 5' overhang which may promote rapid degradation of non-functional pre-miRNA species. Does not play a role in replication-dependent histone mRNA degradation. Due to functional redundancy between TUT4 and TUT7, the identification of the specific role of each of these proteins is difficult. TUT4 and TUT7 restrict retrotransposition of long interspersed element-1 (LINE-1) in cooperation with MOV10 counteracting the RNA chaperonne activity of L1RE1. TUT7 uridylates LINE-1 mRNAs in the cytoplasm which inhibits initiation of reverse transcription once in the nucleus, whereas uridylation by TUT4 destabilizes mRNAs in cytoplasmic ribonucleoprotein granules. This is Terminal uridylyltransferase 7 from Mus musculus (Mouse).